Consider the following 860-residue polypeptide: Envelope glycoprotein gp160 (860 aa).

Residues 1 to 22 form the signal peptide; the sequence is MEPGRNQLFVVILLTSACLVYC. At 23 to 678 the chain is on the extracellular side; the sequence is SQYVTVFYGI…LTSWVKYIQY (656 aa). The N-linked (GlcNAc...) asparagine; by host glycan is linked to Asn37. The cysteines at positions 44 and 57 are disulfide-linked. 21 N-linked (GlcNAc...) asparagine; by host glycosylation sites follow: Asn70, Asn79, Asn112, Asn119, Asn144, Asn152, Asn194, Asn206, Asn238, Asn241, Asn272, Asn278, Asn289, Asn300, Asn310, Asn365, Asn371, Asn398, Asn410, Asn460, and Asn465. Intrachain disulfides connect Cys101–Cys214, Cys108–Cys205, Cys113–Cys166, Cys227–Cys257, and Cys237–Cys249. The interval 113-165 is V1; the sequence is CSRVQGNTTTPNPRTSSSTTSRPPTSAASIINETSNCIENNTCAGLGYEEMMQ. Residues 118-139 form a disordered region; the sequence is GNTTTPNPRTSSSTTSRPPTSA. The span at 119-139 shows a compositional bias: low complexity; that stretch reads NTTTPNPRTSSSTTSRPPTSA. A V2 region spans residues 166–205; that stretch reads CEFNMKGLEQDKKRRYKDTWYLEDVVCDNTTAGTCYMRHC. A V3 region spans residues 305 to 337; the sequence is CKRPGNKTVLPITLMSGLVFHSQPINTRPRQAW. Residues Cys305 and Cys338 are joined by a disulfide bond. 2 cysteine pairs are disulfide-bonded: Cys390–Cys444 and Cys397–Cys417. Residues 397–417 are V4; it reads CNMTWFLNWVEDKNQTRRNYC. The interval 460–468 is V5; that stretch reads NRTHTNITF. A fusion peptide region spans residues 511 to 531; that stretch reads GVFVLGFLGFLATAGSAMGAR. Positions 574 to 590 are immunosuppression; sequence LQARVTAIEKYLKHQAQ. Asn610, Asn619, and Asn635 each carry an N-linked (GlcNAc...) asparagine; by host glycan. Residues 623–644 adopt a coiled-coil conformation; the sequence is QEWEKQVRYLEANISQSLEEAQ. The interval 656–677 is MPER; binding to GalCer; that stretch reads KLNSWDILGNWFDLTSWVKYIQ. The chain crosses the membrane as a helical span at residues 679–699; sequence GVHIVVGIIALRIAIYVVQLL. Topologically, residues 700–860 are cytoplasmic; sequence SRFRKGYRPV…IRQGAELALL (161 aa). The YXXV motif; contains endocytosis signal signature appears at 706–709; sequence YRPV. Residue Cys772 is the site of S-palmitoyl cysteine; by host attachment. The Di-leucine internalization motif motif lies at 859 to 860; it reads LL.

In terms of assembly, the mature envelope protein (Env) consists of a homotrimer of non-covalently associated gp120-gp41 heterodimers. The resulting complex protrudes from the virus surface as a spike. There seems to be as few as 10 spikes on the average virion. Interacts with human CD4, CCR5 and CXCR4, to form a P4HB/PDI-CD4-CXCR4-gp120 complex. Gp120 also interacts with the C-type lectins CD209/DC-SIGN and CLEC4M/DC-SIGNR (collectively referred to as DC-SIGN(R)). Gp120 and gp41 interact with GalCer. The mature envelope protein (Env) consists of a homotrimer of non-covalently associated gp120-gp41 heterodimers. The resulting complex protrudes from the virus surface as a spike. There seems to be as few as 10 spikes on the average virion. Post-translationally, specific enzymatic cleavages in vivo yield mature proteins. Envelope glycoproteins are synthesized as an inactive precursor that is heavily N-glycosylated and processed likely by host cell furin in the Golgi to yield the mature SU and TM proteins. The cleavage site between SU and TM requires the minimal sequence [KR]-X-[KR]-R. Palmitoylation of the transmembrane protein and of Env polyprotein (prior to its proteolytic cleavage) is essential for their association with host cell membrane lipid rafts. Palmitoylation is therefore required for envelope trafficking to classical lipid rafts, but not for viral replication.

The protein resides in the virion membrane. It localises to the host cell membrane. The protein localises to the host endosome membrane. In terms of biological role, the surface protein gp120 (SU) attaches the virus to the host lymphoid cell by binding to the primary receptor CD4. This interaction induces a structural rearrangement creating a high affinity binding site for a chemokine coreceptor like CXCR4 and/or CCR5. This peculiar 2 stage receptor-interaction strategy allows gp120 to maintain the highly conserved coreceptor-binding site in a cryptic conformation, protected from neutralizing antibodies. Since CD4 also displays a binding site for the disulfide-isomerase P4HB/PDI, a P4HB/PDI-CD4-CXCR4-gp120 complex may form. In that complex, P4HB/PDI could reach and reduce gp120 disulfide bonds, causing major conformational changes in gp120. TXN, another PDI family member could also be involved in disulfide rearrangements in Env during fusion. These changes are transmitted to the transmembrane protein gp41 and are thought to activate its fusogenic potential by unmasking its fusion peptide. Its function is as follows. The surface protein gp120 is a ligand for CD209/DC-SIGN and CLEC4M/DC-SIGNR, which are respectively found on dendritic cells (DCs), and on endothelial cells of liver sinusoids and lymph node sinuses. These interactions allow capture of viral particles at mucosal surfaces by these cells and subsequent transmission to permissive cells. DCs are professional antigen presenting cells, critical for host immunity by inducing specific immune responses against a broad variety of pathogens. They act as sentinels in various tissues where they take up antigen, process it, and present it to T-cells following migration to lymphoid organs. HIV subverts the migration properties of dendritic cells to gain access to CD4+ T-cells in lymph nodes. Virus transmission to permissive T-cells occurs either in trans (without DCs infection, through viral capture and transmission), or in cis (following DCs productive infection, through the usual CD4-gp120 interaction), thereby inducing a robust infection. In trans infection, bound virions remain infectious over days and it is proposed that they are not degraded, but protected in non-lysosomal acidic organelles within the DCs close to the cell membrane thus contributing to the viral infectious potential during DCs' migration from the periphery to the lymphoid tissues. On arrival at lymphoid tissues, intact virions recycle back to DCs' cell surface allowing virus transmission to CD4+ T-cells. Virion capture also seems to lead to MHC-II-restricted viral antigen presentation, and probably to the activation of HIV-specific CD4+ cells. The transmembrane protein gp41 (TM) acts as a class I viral fusion protein. Under the current model, the protein has at least 3 conformational states: pre-fusion native state, pre-hairpin intermediate state, and post-fusion hairpin state. During fusion of viral and target intracellular membranes, the coiled coil regions (heptad repeats) assume a trimer-of-hairpins structure, positioning the fusion peptide in close proximity to the C-terminal region of the ectodomain. The formation of this structure appears to drive apposition and subsequent fusion of viral and target cell membranes. Complete fusion occurs in host cell endosomes and is dynamin-dependent, however some lipid transfer might occur at the plasma membrane. The virus undergoes clathrin-dependent internalization long before endosomal fusion, thus minimizing the surface exposure of conserved viral epitopes during fusion and reducing the efficacy of inhibitors targeting these epitopes. Membranes fusion leads to delivery of the nucleocapsid into the cytoplasm. Functionally, the envelope glycoprotein gp160 precursor down-modulates cell surface CD4 antigen by interacting with it in the endoplasmic reticulum and blocking its transport to the cell surface. In terms of biological role, the gp120-gp41 heterodimer seems to contribute to T-cell depletion during HIV-1 infection. The envelope glycoproteins expressed on the surface of infected cells induce apoptosis through an interaction with uninfected cells expressing the receptor (CD4) and the coreceptors CXCR4 or CCR5. This type of bystander killing may be obtained by at least three distinct mechanisms. First, the interaction between the 2 cells can induce cellular fusion followed by nuclear fusion within the syncytium. Syncytia are condemned to die from apoptosis. Second, the 2 interacting cells may not fuse entirely and simply exchange plasma membrane lipids, after a sort of hemifusion process, followed by rapid death. Third, it is possible that virus-infected cells, on the point of undergoing apoptosis, fuse with CD4-expressing cells, in which case apoptosis is rapidly transmitted from one cell to the other and thus occurs in a sort of contagious fashion. Its function is as follows. The gp120-gp41 heterodimer allows rapid transcytosis of the virus through CD4 negative cells such as simple epithelial monolayers of the intestinal, rectal and endocervical epithelial barriers. Both gp120 and gp41 specifically recognize glycosphingolipids galactosyl-ceramide (GalCer) or 3' sulfo-galactosyl-ceramide (GalS) present in the lipid rafts structures of epithelial cells. Binding to these alternative receptors allows the rapid transcytosis of the virus through the epithelial cells. This transcytotic vesicle-mediated transport of virions from the apical side to the basolateral side of the epithelial cells does not involve infection of the cells themselves. This is Envelope glycoprotein gp160 (env) from Homo sapiens (Human).